The primary structure comprises 297 residues: UTP--glucose-1-phosphate uridylyltransferase (297 aa).

The protein belongs to the UDPGP type 2 family.

The catalysed reaction is alpha-D-glucose 1-phosphate + UTP + H(+) = UDP-alpha-D-glucose + diphosphate. It participates in carbohydrate metabolism; nucleotide-sugar metabolism. Its pathway is bacterial outer membrane biogenesis; lipopolysaccharide biosynthesis. In terms of biological role, may play a role in stationary phase survival. The protein is UTP--glucose-1-phosphate uridylyltransferase (galF) of Salmonella typhimurium (strain LT2 / SGSC1412 / ATCC 700720).